The sequence spans 305 residues: Tyrosine recombinase XerC (305 aa).

One can recognise a Core-binding (CB) domain in the interval 4-95 (ISIQELIKQW…TVKNFYKFLE (92 aa)). One can recognise a Tyr recombinase domain in the interval 116–298 (LLPKALSVDD…SIKHLEAVYN (183 aa)). Residues arginine 159, lysine 182, histidine 250, arginine 253, and histidine 276 contribute to the active site. Tyrosine 285 (O-(3'-phospho-DNA)-tyrosine intermediate) is an active-site residue.

It belongs to the 'phage' integrase family. XerC subfamily. Forms a cyclic heterotetrameric complex composed of two molecules of XerC and two molecules of XerD.

The protein localises to the cytoplasm. In terms of biological role, site-specific tyrosine recombinase, which acts by catalyzing the cutting and rejoining of the recombining DNA molecules. The XerC-XerD complex is essential to convert dimers of the bacterial chromosome into monomers to permit their segregation at cell division. It also contributes to the segregational stability of plasmids. This chain is Tyrosine recombinase XerC, found in Rickettsia typhi (strain ATCC VR-144 / Wilmington).